The primary structure comprises 227 residues: Cytidylate kinase (227 aa).

11-19 (GPSGAGKGT) contacts ATP.

The protein belongs to the cytidylate kinase family. Type 1 subfamily.

The protein localises to the cytoplasm. The enzyme catalyses CMP + ATP = CDP + ADP. The catalysed reaction is dCMP + ATP = dCDP + ADP. The polypeptide is Cytidylate kinase (Pasteurella multocida (strain Pm70)).